The following is a 323-amino-acid chain: uncharacterized protein (323 aa).

The S4 RNA-binding domain maps to 16 to 95; that stretch reads QRIDQFCLKI…DKLKIIFEDE (80 aa). Asp148 is a catalytic residue.

It belongs to the pseudouridine synthase RluA family.

The enzyme catalyses a uridine in RNA = a pseudouridine in RNA. This is an uncharacterized protein from Mycoplasma genitalium (strain ATCC 33530 / DSM 19775 / NCTC 10195 / G37) (Mycoplasmoides genitalium).